We begin with the raw amino-acid sequence, 177 residues long: ATP-dependent protease subunit HslV (177 aa).

Thr6 is a catalytic residue. The Na(+) site is built by Ser161, Cys164, and Thr167.

The protein belongs to the peptidase T1B family. HslV subfamily. In terms of assembly, a double ring-shaped homohexamer of HslV is capped on each side by a ring-shaped HslU homohexamer. The assembly of the HslU/HslV complex is dependent on binding of ATP.

Its subcellular location is the cytoplasm. The catalysed reaction is ATP-dependent cleavage of peptide bonds with broad specificity.. With respect to regulation, allosterically activated by HslU binding. Its function is as follows. Protease subunit of a proteasome-like degradation complex believed to be a general protein degrading machinery. The sequence is that of ATP-dependent protease subunit HslV from Thermodesulfovibrio yellowstonii (strain ATCC 51303 / DSM 11347 / YP87).